The following is a 65-amino-acid chain: Large ribosomal subunit protein bL35 (65 aa).

It belongs to the bacterial ribosomal protein bL35 family.

This chain is Large ribosomal subunit protein bL35, found in Nitrosomonas europaea (strain ATCC 19718 / CIP 103999 / KCTC 2705 / NBRC 14298).